The following is a 281-amino-acid chain: Beta-etherase (281 aa).

One can recognise a GST N-terminal domain in the interval 11–87; that stretch reads DLQLESGCTI…YLDEKYPDRP (77 aa). Residues 244–281 form a disordered region; that stretch reads GDPEPFVRQTGPAGAGGQALNKGPQTTKMPPRVAEKAD.

It belongs to the GST superfamily.

The protein resides in the cell inner membrane. Functionally, able to degrade various dimeric lignin compounds. Catalyzes the unique and reductive cleavage of arylglycerol-beta-aryl ether. In Sphingobium sp. (strain NBRC 103272 / SYK-6), this protein is Beta-etherase (ligE).